The following is a 188-amino-acid chain: UPF0301 protein Smlt1098 (188 aa).

This sequence belongs to the UPF0301 (AlgH) family.

The chain is UPF0301 protein Smlt1098 from Stenotrophomonas maltophilia (strain K279a).